We begin with the raw amino-acid sequence, 866 residues long: Paramyosin (866 aa).

The nonhelical region stretch occupies residues 1 to 22; that stretch reads MMNHDTESHVKISRTIYRGVSP. Residues 23 to 839 adopt a coiled-coil conformation; it reads STTRLESRVR…AERTVTVRRV (817 aa). The interval 840–866 is nonhelical region; it reads GPGGRAVSVARELSVTSNRGMRATSMM.

It belongs to the paramyosin family. Homodimer.

The protein localises to the cytoplasm. The protein resides in the myofibril. Its function is as follows. Paramyosin is a major structural component of many thick filaments isolated from invertebrate muscles. This chain is Paramyosin, found in Schistosoma japonicum (Blood fluke).